We begin with the raw amino-acid sequence, 192 residues long: Ion-translocating oxidoreductase complex subunit A (192 aa).

6 helical membrane passes run L5–L25, I39–V59, I63–V83, L102–L122, I134–M154, and S171–V191.

This sequence belongs to the NqrDE/RnfAE family. In terms of assembly, the complex is composed of six subunits: RnfA, RnfB, RnfC, RnfD, RnfE and RnfG.

It localises to the cell inner membrane. In terms of biological role, part of a membrane-bound complex that couples electron transfer with translocation of ions across the membrane. In Vibrio atlanticus (strain LGP32) (Vibrio splendidus (strain Mel32)), this protein is Ion-translocating oxidoreductase complex subunit A.